Here is a 259-residue protein sequence, read N- to C-terminus: 5'-nucleotidase SurE (259 aa).

A divalent metal cation is bound by residues Asp8, Asp9, Ser40, and Asn92.

The protein belongs to the SurE nucleotidase family. A divalent metal cation is required as a cofactor.

The protein localises to the cytoplasm. The enzyme catalyses a ribonucleoside 5'-phosphate + H2O = a ribonucleoside + phosphate. In terms of biological role, nucleotidase that shows phosphatase activity on nucleoside 5'-monophosphates. The polypeptide is 5'-nucleotidase SurE (Stenotrophomonas maltophilia (strain K279a)).